A 599-amino-acid polypeptide reads, in one-letter code: Elongation factor 4 (599 aa).

The region spanning 4 to 186 (EHIRNFSIIA…EIVKKIPPPQ (183 aa)) is the tr-type G domain. GTP is bound by residues 16–21 (DHGKST) and 133–136 (NKID).

It belongs to the TRAFAC class translation factor GTPase superfamily. Classic translation factor GTPase family. LepA subfamily.

The protein localises to the cell inner membrane. The enzyme catalyses GTP + H2O = GDP + phosphate + H(+). Functionally, required for accurate and efficient protein synthesis under certain stress conditions. May act as a fidelity factor of the translation reaction, by catalyzing a one-codon backward translocation of tRNAs on improperly translocated ribosomes. Back-translocation proceeds from a post-translocation (POST) complex to a pre-translocation (PRE) complex, thus giving elongation factor G a second chance to translocate the tRNAs correctly. Binds to ribosomes in a GTP-dependent manner. This Geobacter sp. (strain M21) protein is Elongation factor 4.